A 36-amino-acid polypeptide reads, in one-letter code: Photosystem II reaction center protein X (36 aa).

The helical transmembrane segment at 9–29 threads the bilayer; the sequence is LWSIFWGGVVVALGAAALTAI.

The protein belongs to the PsbX family. Type 1 subfamily. In terms of assembly, PSII is composed of 1 copy each of membrane proteins PsbA, PsbB, PsbC, PsbD, PsbE, PsbF, PsbH, PsbI, PsbJ, PsbK, PsbL, PsbM, PsbT, PsbX, Psb30/Ycf12, peripheral proteins PsbO, CyanoQ (PsbQ), PsbU, PsbV and a large number of cofactors. It forms dimeric complexes.

It localises to the cell inner membrane. Its function is as follows. Involved in the binding and/or turnover of quinones at the Q(B) site of photosystem II (PSII). PSII is a light-driven water plastoquinone oxidoreductase, using light energy to abstract electrons from H(2)O, generating a proton gradient subsequently used for ATP formation. This is Photosystem II reaction center protein X from Gloeobacter violaceus (strain ATCC 29082 / PCC 7421).